The following is a 301-amino-acid chain: GTPase Era (301 aa).

An Era-type G domain is found at 8-174 (KSGFVALVGR…LKTLKDYLPE (167 aa)). Positions 16-23 (GRPNVGKS) are G1. 16–23 (GRPNVGKS) is a binding site for GTP. The interval 42 to 46 (QTTRN) is G2. A G3 region spans residues 63–66 (DTPG). GTP contacts are provided by residues 63–67 (DTPGI) and 124–127 (NKID). Positions 124-127 (NKID) are G4. The tract at residues 153 to 155 (ISA) is G5. In terms of domain architecture, KH type-2 spans 197–282 (IREQILRLTD…NLKLWVKVRR (86 aa)).

Belongs to the TRAFAC class TrmE-Era-EngA-EngB-Septin-like GTPase superfamily. Era GTPase family. As to quaternary structure, monomer.

It is found in the cytoplasm. The protein resides in the cell membrane. An essential GTPase that binds both GDP and GTP, with rapid nucleotide exchange. Plays a role in 16S rRNA processing and 30S ribosomal subunit biogenesis and possibly also in cell cycle regulation and energy metabolism. The protein is GTPase Era of Lactobacillus delbrueckii subsp. bulgaricus (strain ATCC 11842 / DSM 20081 / BCRC 10696 / JCM 1002 / NBRC 13953 / NCIMB 11778 / NCTC 12712 / WDCM 00102 / Lb 14).